The following is a 261-amino-acid chain: uncharacterized protein (261 aa).

The next 6 membrane-spanning stretches (helical) occupy residues 31–51, 71–91, 101–121, 130–150, 167–187, and 213–233; these read TFLS…TGIV, TNVM…SWLL, LAYI…AGIA, LTSS…ASFI, LLLF…IPYV, and FAWL…YLAI.

The protein resides in the cell membrane. This is an uncharacterized protein from Mycoplasma genitalium (strain ATCC 33530 / DSM 19775 / NCTC 10195 / G37) (Mycoplasmoides genitalium).